The chain runs to 371 residues: UDP-N-acetylglucosamine--N-acetylmuramyl-(pentapeptide) pyrophosphoryl-undecaprenol N-acetylglucosamine transferase (371 aa).

UDP-N-acetyl-alpha-D-glucosamine contacts are provided by residues 10–12 (TGG), Asn-124, Arg-165, Ser-191, Ile-246, and Gln-291.

Belongs to the glycosyltransferase 28 family. MurG subfamily.

The protein localises to the cell inner membrane. The catalysed reaction is di-trans,octa-cis-undecaprenyl diphospho-N-acetyl-alpha-D-muramoyl-L-alanyl-D-glutamyl-meso-2,6-diaminopimeloyl-D-alanyl-D-alanine + UDP-N-acetyl-alpha-D-glucosamine = di-trans,octa-cis-undecaprenyl diphospho-[N-acetyl-alpha-D-glucosaminyl-(1-&gt;4)]-N-acetyl-alpha-D-muramoyl-L-alanyl-D-glutamyl-meso-2,6-diaminopimeloyl-D-alanyl-D-alanine + UDP + H(+). It functions in the pathway cell wall biogenesis; peptidoglycan biosynthesis. In terms of biological role, cell wall formation. Catalyzes the transfer of a GlcNAc subunit on undecaprenyl-pyrophosphoryl-MurNAc-pentapeptide (lipid intermediate I) to form undecaprenyl-pyrophosphoryl-MurNAc-(pentapeptide)GlcNAc (lipid intermediate II). The protein is UDP-N-acetylglucosamine--N-acetylmuramyl-(pentapeptide) pyrophosphoryl-undecaprenol N-acetylglucosamine transferase of Geobacter sp. (strain M21).